The following is a 341-amino-acid chain: Glycerol-3-phosphate dehydrogenase [NAD(P)+] (341 aa).

Residues Ser14, Phe15, Arg35, and Lys108 each contribute to the NADPH site. 2 residues coordinate sn-glycerol 3-phosphate: Lys108 and Gly136. Residue Ala140 coordinates NADPH. Sn-glycerol 3-phosphate is bound by residues Lys191, Asp244, Ser254, Arg255, and Asn256. The active-site Proton acceptor is Lys191. Residue Arg255 coordinates NADPH. Val279 and Glu281 together coordinate NADPH.

The protein belongs to the NAD-dependent glycerol-3-phosphate dehydrogenase family.

Its subcellular location is the cytoplasm. It carries out the reaction sn-glycerol 3-phosphate + NAD(+) = dihydroxyacetone phosphate + NADH + H(+). The catalysed reaction is sn-glycerol 3-phosphate + NADP(+) = dihydroxyacetone phosphate + NADPH + H(+). It functions in the pathway membrane lipid metabolism; glycerophospholipid metabolism. Catalyzes the reduction of the glycolytic intermediate dihydroxyacetone phosphate (DHAP) to sn-glycerol 3-phosphate (G3P), the key precursor for phospholipid synthesis. The chain is Glycerol-3-phosphate dehydrogenase [NAD(P)+] from Pseudomonas fluorescens (strain SBW25).